The chain runs to 583 residues: Eukaryotic translation initiation factor 3 subunit D (583 aa).

The tract at residues 116-150 is disordered; the sequence is GRAQRGAGQRGGRAGFQRVGAGRGQGDRFYDNRGG. Over residues 140-149 the composition is skewed to basic and acidic residues; it reads QGDRFYDNRG. Residues 298 to 312 are RNA gate; sequence SLDLVTVNENAIDAP. The disordered stretch occupies residues 561 to 583; the sequence is NTFEEDEEAAAEEEEQKAEEDEE. Residues 563 to 583 show a composition bias toward acidic residues; sequence FEEDEEAAAEEEEQKAEEDEE.

It belongs to the eIF-3 subunit D family. As to quaternary structure, component of the eukaryotic translation initiation factor 3 (eIF-3) complex.

It is found in the cytoplasm. MRNA cap-binding component of the eukaryotic translation initiation factor 3 (eIF-3) complex, which is involved in protein synthesis of a specialized repertoire of mRNAs and, together with other initiation factors, stimulates binding of mRNA and methionyl-tRNAi to the 40S ribosome. The eIF-3 complex specifically targets and initiates translation of a subset of mRNAs involved in cell proliferation. In the eIF-3 complex, eif3d specifically recognizes and binds the 7-methylguanosine cap of a subset of mRNAs. This is Eukaryotic translation initiation factor 3 subunit D from Aspergillus oryzae (strain ATCC 42149 / RIB 40) (Yellow koji mold).